The following is a 115-amino-acid chain: Large ribosomal subunit protein bL20 (115 aa).

Belongs to the bacterial ribosomal protein bL20 family.

In terms of biological role, binds directly to 23S ribosomal RNA and is necessary for the in vitro assembly process of the 50S ribosomal subunit. It is not involved in the protein synthesizing functions of that subunit. The protein is Large ribosomal subunit protein bL20 of Prochlorococcus marinus (strain NATL2A).